The sequence spans 213 residues: MGREFIPLFENWANSYDDTVVGRDLQYKEVFRDYDGILDDVVSRSGHKVLEFGVGTGNLTAKLLAAGKAVTGVEPSKAMREIAEAKLPENAVIVDGDFIDFPDPPFSPDTIVSSYAFHHLTNEEKREAVKRYGKMLGKHGKIVFADTVFKNREAFSAAVKKAKENGFLQLAEDLETEHYPTISEMETIFTSEHFSIAFQKHNDFVWVMEAAKL.

S-adenosyl-L-methionine contacts are provided by glycine 53, glutamate 74, and aspartate 97.

The protein belongs to the methyltransferase superfamily. YrrT family.

Its function is as follows. Could be a S-adenosyl-L-methionine-dependent methyltransferase. This is an uncharacterized protein from Bacillus licheniformis (strain ATCC 14580 / DSM 13 / JCM 2505 / CCUG 7422 / NBRC 12200 / NCIMB 9375 / NCTC 10341 / NRRL NRS-1264 / Gibson 46).